We begin with the raw amino-acid sequence, 303 residues long: Lysosomal amino acid transporter 1 homolog (303 aa).

Topologically, residues 1–38 (MAEGLRAPPPPGNGSECPDGARWVLRLLGECARDGRDV) are lumenal. N-linked (GlcNAc...) asparagine glycosylation is present at asparagine 13. Residues 36-102 (RDVGSALLGL…LANQLPLQVY (67 aa)) enclose the PQ-loop 1 domain. Residues 39 to 59 (GSALLGLLSIGCFAAAALPQF) traverse the membrane as a helical segment. Residues 60-73 (YQACKTGIMDRALS) lie on the Cytoplasmic side of the membrane. A helical membrane pass occupies residues 74 to 94 (IYFLLGWLGGDLLNLIGSFLA). Topologically, residues 95–96 (NQ) are lumenal. A helical membrane pass occupies residues 97 to 117 (LPLQVYTAVYYVLADLVMLSL). The Cytoplasmic portion of the chain corresponds to 118–131 (YGYYKAKNWGTGAT). A helical transmembrane segment spans residues 132 to 152 (ASINAACLFCLLGTATTLTVL). Topologically, residues 153 to 182 (SHDTGPAPNPAAFGGRSLLSLGLEGPGPEP) are lumenal. Residues 183–203 (ISKTEIIGFAIGSISSVLYLC) traverse the membrane as a helical segment. Residues 186–251 (TEIIGFAIGS…LKNPEPGQSE (66 aa)) enclose the PQ-loop 2 domain. Over 204–220 (SRLPQIYTNYRRKSTAG) the chain is Cytoplasmic. A helical membrane pass occupies residues 221-241 (VSFLLFALVMLGNLLYGTSVL). Topologically, residues 242–260 (LKNPEPGQSEGDYILHHLP) are lumenal. Residues 261–281 (WLIGSLGVLSLDVIISFQFLA) traverse the membrane as a helical segment. The Cytoplasmic portion of the chain corresponds to 282–303 (YRTGQPSAGEEREALLAEHGDS). The short motif at 296–297 (LL) is the Di-leucine motif element.

It belongs to the laat-1 family.

The protein resides in the lysosome membrane. Amino acid transporter that specifically mediates the pH-dependent export of the cationic amino acids arginine, histidine and lysine from lysosomes. This chain is Lysosomal amino acid transporter 1 homolog (SLC66A1), found in Gallus gallus (Chicken).